The primary structure comprises 366 residues: tRNA/tmRNA (uracil-C(5))-methyltransferase (366 aa).

Residues glutamine 190, tyrosine 218, asparagine 223, glutamate 239, and aspartate 299 each contribute to the S-adenosyl-L-methionine site. Cysteine 324 functions as the Nucleophile in the catalytic mechanism. The Proton acceptor role is filled by glutamate 358.

It belongs to the class I-like SAM-binding methyltransferase superfamily. RNA M5U methyltransferase family. TrmA subfamily.

It catalyses the reaction uridine(54) in tRNA + S-adenosyl-L-methionine = 5-methyluridine(54) in tRNA + S-adenosyl-L-homocysteine + H(+). The catalysed reaction is uridine(341) in tmRNA + S-adenosyl-L-methionine = 5-methyluridine(341) in tmRNA + S-adenosyl-L-homocysteine + H(+). Dual-specificity methyltransferase that catalyzes the formation of 5-methyluridine at position 54 (m5U54) in all tRNAs, and that of position 341 (m5U341) in tmRNA (transfer-mRNA). The protein is tRNA/tmRNA (uracil-C(5))-methyltransferase of Escherichia coli (strain UTI89 / UPEC).